The following is a 373-amino-acid chain: NADPH-dependent 3-keto-steroid reductase Hsd3b5 (373 aa).

NADP(+) is bound by residues 10 to 15 (GAGGFL), tyrosine 155, and lysine 159. Lysine 159 acts as the Proton donor in catalysis. A helical transmembrane segment spans residues 288-308 (LPLLYWLAFLLETVSFLLRPF). Position 350 is an N6-acetyllysine (lysine 350).

This sequence belongs to the 3-beta-HSD family. Expressed predominantly in male liver.

Its subcellular location is the endoplasmic reticulum membrane. It localises to the mitochondrion membrane. It catalyses the reaction a 3beta-hydroxysteroid + NADP(+) = a 3-oxosteroid + NADPH + H(+). The catalysed reaction is 5alpha-androstane-3beta,17beta-diol + NADP(+) = 17beta-hydroxy-5alpha-androstan-3-one + NADPH + H(+). The enzyme catalyses 3beta-hydroxy-5alpha-androstan-17-one + NADP(+) = 5alpha-androstan-3,17-dione + NADPH + H(+). It participates in steroid metabolism. Functionally, responsible for the reduction of the oxo group on the C-3 of 5alpha-androstane steroids. Catalyzes the conversion of dihydrotestosterone to its inactive form 5alpha-androstanediol, that does not bind androgen receptor/AR. Also converts androstanedione, a precursor of testosterone and estrone, to epiandrosterone. Does not function as an isomerase. The protein is NADPH-dependent 3-keto-steroid reductase Hsd3b5 of Rattus norvegicus (Rat).